Consider the following 450-residue polypeptide: MAVQAPEVDKLSLNEESVAKAPTKGSAAQGTAGDEDAENEESDEDDDQGVAEGAVATGDKKKRKRKPKKKKKKGVAKVQSNPPRVPLSTLFPNSQYPEGDIVEYKDDNAYRTTNEEKRHLDRMNNDFLSDYRQAAEIHRQVRQYAQKELIKPGRSLTEIAEGIEDSVRALTGHMGLEEGDSLVAGMGFPTGLNINHCAAHYSPNAGNKMVLQHGDVMKVDFGVHVNGRIVDSAFTVAFDPVYDNLLEAVKDATNTGIREAGIDVRMSDIGAAIQEAMESYEVELNGTTYPVKAIRNLNGHTIGHYLIHGGSTGKSVPIVKGGDQTKMEEGETYAIETFGSTGKGYVRDDMEVSHYARVPDAPNVPLRLSSAKNLLNVITKNFGTLPFCRRYLDRLGQDKYLLGLNNLVSSGLVDAYPPLVDVKGSYTAQFEHTILLRPNVKEVITRGDDY.

Positions 1 to 99 are disordered; sequence MAVQAPEVDK…LFPNSQYPEG (99 aa). Acidic residues predominate over residues 33-49; sequence GDEDAENEESDEDDDQG. Positions 60 to 75 are enriched in basic residues; sequence KKKRKRKPKKKKKKGV. Residue His200 participates in substrate binding. Positions 220, 231, and 300 each coordinate a divalent metal cation. His308 is a binding site for substrate. Residues Glu336 and Glu431 each contribute to the a divalent metal cation site.

The protein belongs to the peptidase M24A family. Methionine aminopeptidase eukaryotic type 2 subfamily. Co(2+) is required as a cofactor. Requires Zn(2+) as cofactor. Mn(2+) serves as cofactor. It depends on Fe(2+) as a cofactor.

It localises to the cytoplasm. It carries out the reaction Release of N-terminal amino acids, preferentially methionine, from peptides and arylamides.. In terms of biological role, cotranslationally removes the N-terminal methionine from nascent proteins. The N-terminal methionine is often cleaved when the second residue in the primary sequence is small and uncharged (Met-Ala-, Cys, Gly, Pro, Ser, Thr, or Val). The polypeptide is Methionine aminopeptidase 2 (Uncinocarpus reesii (strain UAMH 1704)).